The chain runs to 416 residues: CinA-like protein (416 aa).

It belongs to the CinA family.

In Synechocystis sp. (strain ATCC 27184 / PCC 6803 / Kazusa), this protein is CinA-like protein.